Consider the following 50-residue polypeptide: Large ribosomal subunit protein bL33B (50 aa).

Belongs to the bacterial ribosomal protein bL33 family.

The sequence is that of Large ribosomal subunit protein bL33B from Streptococcus pneumoniae (strain ATCC BAA-255 / R6).